The primary structure comprises 469 residues: Interstitial collagenase (469 aa).

The first 18 residues, 1 to 18 (MPRLPLLLLLLWGTGSHG), serve as a signal peptide directing secretion. Residues 19–99 (FPAATSETQE…PRCGVPDVAP (81 aa)) constitute a propeptide, activation peptide. Positions 90–97 (PRCGVPDV) match the Cysteine switch motif. Cysteine 92 contacts Zn(2+). A glycan (N-linked (GlcNAc...) asparagine) is linked at asparagine 120. Residues aspartate 124 and aspartate 158 each contribute to the Ca(2+) site. Zn(2+)-binding residues include histidine 168 and aspartate 170. 4 residues coordinate Ca(2+): aspartate 175, glycine 176, glycine 178, and asparagine 180. Histidine 183 serves as a coordination point for Zn(2+). Ca(2+) is bound by residues glycine 190, glycine 192, and aspartate 194. Position 196 (histidine 196) interacts with Zn(2+). Ca(2+)-binding residues include aspartate 198, aspartate 199, and glutamate 201. Histidine 218 is a binding site for Zn(2+). Glutamate 219 is a catalytic residue. Zn(2+) contacts are provided by histidine 222 and histidine 228. Threonine 274 is subject to Phosphothreonine. 4 Hemopexin repeats span residues 275-324 (PEVC…WPQL), 325-371 (PNGL…FGFP), 374-422 (VKSI…FPGI), and 423-466 (GNKV…WFNC). Cysteine 278 and cysteine 466 are oxidised to a cystine. Ca(2+)-binding residues include aspartate 285 and glutamine 329. Tyrosine 360 is modified (phosphotyrosine; by PKDCC). Ca(2+) contacts are provided by aspartate 378 and aspartate 427.

This sequence belongs to the peptidase M10A family. Ca(2+) serves as cofactor. Zn(2+) is required as a cofactor. Post-translationally, tyrosine phosphorylated in platelets by PKDCC/VLK.

It is found in the secreted. The protein localises to the extracellular space. Its subcellular location is the extracellular matrix. It carries out the reaction Cleavage of the triple helix of collagen at about three-quarters of the length of the molecule from the N-terminus, at 775-Gly-|-Ile-776 in the alpha1(I) chain. Cleaves synthetic substrates and alpha-macroglobulins at bonds where P1' is a hydrophobic residue.. Can be activated without removal of the activation peptide. Its function is as follows. Cleaves collagens of types I, II, and III at one site in the helical domain. Also cleaves collagens of types VII and X. This Bos taurus (Bovine) protein is Interstitial collagenase (MMP1).